We begin with the raw amino-acid sequence, 429 residues long: Threonine synthase (429 aa).

Residue Lys107 is modified to N6-(pyridoxal phosphate)lysine.

Belongs to the threonine synthase family. It depends on pyridoxal 5'-phosphate as a cofactor.

The enzyme catalyses O-phospho-L-homoserine + H2O = L-threonine + phosphate. It functions in the pathway amino-acid biosynthesis; L-threonine biosynthesis; L-threonine from L-aspartate: step 5/5. Functionally, catalyzes the gamma-elimination of phosphate from L-phosphohomoserine and the beta-addition of water to produce L-threonine. The chain is Threonine synthase (thrC) from Serratia marcescens.